We begin with the raw amino-acid sequence, 234 residues long: Golgi SNAP receptor complex member 1 (234 aa).

Over 1 to 212 (MSETWEALRK…MQKIKTKKQK (212 aa)) the chain is Cytoplasmic. A coiled-coil region spans residues 54 to 121 (VTTEIEGLIE…RDNVDQVLQR (68 aa)). A helical; Anchor for type IV membrane protein membrane pass occupies residues 213-233 (NTMILAGVISACLIFTIFWII). Position 234 (N234) is a topological domain, vesicular.

The protein belongs to the GOSR1 family. Component of several multiprotein Golgi SNARE complexes.

Its subcellular location is the golgi apparatus membrane. Its function is as follows. Involved in transport from the ER to the Golgi apparatus as well as in intra-Golgi transport. It belongs to a super-family of proteins called t-SNAREs or soluble NSF (N-ethylmaleimide-sensitive factor) attachment protein receptor. Cooperates with ykt-6 for proper expression of Golgi-resident proteins. Required along with ykt-6 for normal embryonic development, seam cell division or differentiation, and ray formation. The sequence is that of Golgi SNAP receptor complex member 1 from Caenorhabditis briggsae.